A 334-amino-acid chain; its full sequence is Glucokinase-like protein PD_0680 (334 aa).

A18 to T23 contacts ATP.

This sequence belongs to the bacterial glucokinase family.

This Xylella fastidiosa (strain Temecula1 / ATCC 700964) protein is Glucokinase-like protein PD_0680.